The primary structure comprises 290 residues: ATP synthase gamma chain (290 aa).

Belongs to the ATPase gamma chain family. F-type ATPases have 2 components, CF(1) - the catalytic core - and CF(0) - the membrane proton channel. CF(1) has five subunits: alpha(3), beta(3), gamma(1), delta(1), epsilon(1). CF(0) has three main subunits: a, b and c.

The protein resides in the cell membrane. Functionally, produces ATP from ADP in the presence of a proton gradient across the membrane. The gamma chain is believed to be important in regulating ATPase activity and the flow of protons through the CF(0) complex. This Roseiflexus castenholzii (strain DSM 13941 / HLO8) protein is ATP synthase gamma chain.